A 182-amino-acid chain; its full sequence is Gas vesicle protein H1 (182 aa).

Acidic residues predominate over residues 1 to 11 (MVPDENDDASD). Disordered stretches follow at residues 1 to 21 (MVPDENDDASDDQSSQLSGLL) and 65 to 106 (GRAD…GGTS). The span at 12-21 (DQSSQLSGLL) shows a compositional bias: low complexity. The span at 92–101 (TTEDSIHVET) shows a compositional bias: basic and acidic residues.

Belongs to the gas vesicle GvpH family. GvpF to GvpM interact with each other in vitro, and may form multi-subunit complex(es). Interacts with GvpC1. Might interact with GvpA1.

It localises to the cytoplasm. The protein resides in the gas vesicle. Proteins GvpF to GvpM might be involved in nucleating gas vesicle formation. May be important for the stability of gas vesicles. Gas vesicles are hollow, gas filled proteinaceous nanostructures found in several microbial planktonic microorganisms. They allow positioning of halobacteria at the optimal depth for growth in the poorly aerated, shallow brine pools of their habitat. In terms of biological role, expression of a 9.5 kb p-vac DNA fragment containing 2 divergently transcribed regions (gvpD-gvpE-gvpF-gvpG-gvpH-gvpI-gvpJ-gvpK-gvpL-gvpM and gvpA-gvpC-gvpN-gvpO) allows H.volcanii to produce gas vesicles. A similar region restores gas vesicle production in H.halobium without the p-vac locus, but it still has the c-vac locus. The sequence is that of Gas vesicle protein H1 (gvpH11) from Halobacterium salinarum (strain ATCC 700922 / JCM 11081 / NRC-1) (Halobacterium halobium).